Consider the following 692-residue polypeptide: Protein arginine N-methyltransferase 7 (692 aa).

SAM-dependent MTase PRMT-type domains follow at residues 14–345 (SLEW…YCVW) and 358–684 (SAYQ…ITME). An Omega-N-methylarginine modification is found at R32. Active-site residues include E144 and E153.

This sequence belongs to the class I-like SAM-binding methyltransferase superfamily. Protein arginine N-methyltransferase family. PRMT7 subfamily. Homodimer and heterodimer. Interacts with PRMT5 and SNRPD3. Interacts with CTCFL.

It localises to the cytoplasm. The protein localises to the cytosol. Its subcellular location is the nucleus. It catalyses the reaction L-arginyl-[protein] + S-adenosyl-L-methionine = N(omega)-methyl-L-arginyl-[protein] + S-adenosyl-L-homocysteine + H(+). In terms of biological role, arginine methyltransferase that can both catalyze the formation of omega-N monomethylarginine (MMA) and symmetrical dimethylarginine (sDMA), with a preference for the formation of MMA. Specifically mediates the symmetrical dimethylation of arginine residues in the small nuclear ribonucleoproteins Sm D1 (SNRPD1) and Sm D3 (SNRPD3); such methylation being required for the assembly and biogenesis of snRNP core particles. Specifically mediates the symmetric dimethylation of histone H4 'Arg-3' to form H4R3me2s. Plays a role in gene imprinting by being recruited by CTCFL at the H19 imprinted control region (ICR) and methylating histone H4 to form H4R3me2s, possibly leading to recruit DNA methyltransferases at these sites. May also play a role in embryonic stem cell (ESC) pluripotency. Also able to mediate the arginine methylation of histone H2A and myelin basic protein (MBP) in vitro; the relevance of such results is however unclear in vivo. The polypeptide is Protein arginine N-methyltransferase 7 (Prmt7) (Mus musculus (Mouse)).